Here is a 141-residue protein sequence, read N- to C-terminus: Nucleoside triphosphatase NudI (141 aa).

The Nudix hydrolase domain occupies 1 to 141; it reads MRQRTIVCPI…RLTFTQKGLL (141 aa). The short motif at 38–59 is the Nudix box element; that stretch reads GGMEPGETMEEALRREIREELG.

This sequence belongs to the Nudix hydrolase family. NudI subfamily. In terms of assembly, monomer. Mg(2+) serves as cofactor.

It catalyses the reaction a ribonucleoside 5'-triphosphate + H2O = a ribonucleoside 5'-phosphate + diphosphate + H(+). The enzyme catalyses a 2'-deoxyribonucleoside 5'-triphosphate + H2O = a 2'-deoxyribonucleoside 5'-phosphate + diphosphate + H(+). The catalysed reaction is dUTP + H2O = dUMP + diphosphate + H(+). It carries out the reaction dTTP + H2O = dTMP + diphosphate + H(+). It catalyses the reaction dCTP + H2O = dCMP + diphosphate + H(+). Catalyzes the hydrolysis of nucleoside triphosphates, with a preference for pyrimidine deoxynucleoside triphosphates (dUTP, dTTP and dCTP). This is Nucleoside triphosphatase NudI from Enterobacter sp. (strain 638).